Here is a 28-residue protein sequence, read N- to C-terminus: Expansin-B1 (28 aa).

In terms of domain architecture, Expansin-like CBD spans 11–28 (MLLSLQGPXSLRMVSESG).

It belongs to the expansin family. Expansin B subfamily.

It localises to the secreted. The protein resides in the cell wall. The protein localises to the membrane. Its function is as follows. May cause loosening and extension of plant cell walls by disrupting non-covalent bonding between cellulose microfibrils and matrix glucans. The chain is Expansin-B1 from Pseudotsuga menziesii (Douglas-fir).